Reading from the N-terminus, the 112-residue chain is Probable 4-amino-4-deoxy-L-arabinose-phosphoundecaprenol flippase subunit ArnE (112 aa).

Residues 35 to 110 (RHILFWLGMA…IVVGIVILGT (76 aa)) form the EamA domain. 3 consecutive transmembrane segments (helical) span residues 37 to 57 (ILFW…LWLS), 66 to 86 (IAYP…WGIW), and 89 to 109 (PVAR…VILG).

Belongs to the ArnE family. Heterodimer of ArnE and ArnF.

The protein resides in the cell inner membrane. The protein operates within bacterial outer membrane biogenesis; lipopolysaccharide biosynthesis. Functionally, translocates 4-amino-4-deoxy-L-arabinose-phosphoundecaprenol (alpha-L-Ara4N-phosphoundecaprenol) from the cytoplasmic to the periplasmic side of the inner membrane. The sequence is that of Probable 4-amino-4-deoxy-L-arabinose-phosphoundecaprenol flippase subunit ArnE from Klebsiella pneumoniae (strain 342).